We begin with the raw amino-acid sequence, 260 residues long: Acetylglutamate kinase (260 aa).

Residues 46–47, arginine 68, and asparagine 160 contribute to the substrate site; that span reads GG.

This sequence belongs to the acetylglutamate kinase family. ArgB subfamily.

The protein localises to the cytoplasm. It carries out the reaction N-acetyl-L-glutamate + ATP = N-acetyl-L-glutamyl 5-phosphate + ADP. It participates in amino-acid biosynthesis; L-arginine biosynthesis; N(2)-acetyl-L-ornithine from L-glutamate: step 2/4. Catalyzes the ATP-dependent phosphorylation of N-acetyl-L-glutamate. This Shewanella sp. (strain ANA-3) protein is Acetylglutamate kinase.